A 62-amino-acid polypeptide reads, in one-letter code: Large ribosomal subunit protein uL30 (62 aa).

Belongs to the universal ribosomal protein uL30 family. In terms of assembly, part of the 50S ribosomal subunit.

The sequence is that of Large ribosomal subunit protein uL30 from Alkalilimnicola ehrlichii (strain ATCC BAA-1101 / DSM 17681 / MLHE-1).